A 492-amino-acid polypeptide reads, in one-letter code: Catalase-2 (492 aa).

Catalysis depends on residues His65 and Asn138. Tyr348 contacts heme.

It belongs to the catalase family. Homotetramer and heterotetramer. At least six or seven isozymes are produced from a mixture of 3 gene products. Interacts with NCA1. Interacts with LSD1. The cofactor is heme.

Its subcellular location is the cytoplasm. The protein resides in the cytosol. The protein localises to the peroxisome matrix. The catalysed reaction is 2 H2O2 = O2 + 2 H2O. Functionally, catalyzes the degradation of hydrogen peroxide (H(2)O(2)) generated by peroxisomal oxidases to water and oxygen, thereby protecting cells from the toxic effects of hydrogen peroxide. The chain is Catalase-2 (CAT2) from Arabidopsis thaliana (Mouse-ear cress).